Reading from the N-terminus, the 2349-residue chain is Reducing polyketide synthase AFT16-1 (2349 aa).

A compositionally biased stretch (basic and acidic residues) spans 1-14 (MNGKSRDNGHDGKR). 2 disordered regions span residues 1-21 (MNGK…VPAE) and 37-80 (TNPS…TSNS). In terms of domain architecture, Ketosynthase family 3 (KS3) spans 20–462 (AEPIAIVGTA…GTNAHTILES (443 aa)). Catalysis depends on for beta-ketoacyl synthase activity residues cysteine 194, histidine 333, and histidine 382. Positions 578–888 (VFTGQGAQWP…LLYKGVLERF (311 aa)) are malonyl-CoA:ACP transacylase (MAT) domain. Positions 958 to 1092 (HPLLGFRSVD…GDILLSHFAK (135 aa)) are N-terminal hotdog fold. The interval 958–1263 (HPLLGFRSVD…QVEGLKFSCM (306 aa)) is dehydratase (DH) domain. Residues 958-1269 (HPLLGFRSVD…FSCMYPAQET (312 aa)) form the PKS/mFAS DH domain. The Proton acceptor; for dehydratase activity role is filled by histidine 990. Residues 1111–1269 (MSSVEPSLFY…FSCMYPAQET (159 aa)) are C-terminal hotdog fold. Aspartate 1170 serves as the catalytic Proton donor; for dehydratase activity. The tract at residues 1976-2164 (SPNKTYLLVG…VVGVGYVARA (189 aa)) is ketoreductase (KR) domain. The 75-residue stretch at 2273 to 2347 (EILSGSLKQK…GLCLEAIGQW (75 aa)) folds into the Carrier domain. An O-(pantetheine 4'-phosphoryl)serine modification is found at serine 2307.

The protein operates within mycotoxin biosynthesis. In terms of biological role, reducing polyketide synthase; part of the gene clusters that mediate the biosynthesis of the host-selective toxins (HSTs) AF-toxins responsible for Alternaria black spot of strawberry disease by the strawberry pathotype. AF-toxin I and III are valine derivatives of 2,3-dyhydroxy-isovaleric acid and 2-hydroxy-isovaleric acid respectively, while AF II is an isoleucine derivative of 2-hydroxy-valeric acid. These derivatives are bound to a 9,10-epoxy-8-hydroxy-9-methyl-decatrienoic acid (EDA) moiety. On cellular level, AF-toxins affect plasma membrane of susceptible cells and cause a sudden increase in loss of K(+) after a few minutes of toxin treatment. The aldo-keto reductase AFTS1 catalyzes the conversion of 2-keto-isovaleric acid (2-KIV) to 2-hydroxy-isovaleric acid (2-HIV) by reduction of its ketone to an alcohol. The acyl-CoA ligase AFT1, the hydrolase AFT2 and the enoyl-CoA hydratases AFT3 and AFT6, but also the polyketide synthase AFT9, the acyl-CoA dehydrogenase AFT10, the cytochrome P450 monooxygenase AFT11 and the oxidoreductase AFT12 are all involved in the biosynthesis of the AK-, AF- and ACT-toxin common EDA structural moiety. The exact function of each enzyme, and of additional enzymes identified within the AF-toxin clusters have still to be determined. The sequence is that of Reducing polyketide synthase AFT16-1 from Alternaria alternata (Alternaria rot fungus).